Consider the following 492-residue polypeptide: N-succinylglutamate 5-semialdehyde dehydrogenase (492 aa).

220–225 (GSANTG) contributes to the NAD(+) binding site. Active-site residues include Glu243 and Cys277.

This sequence belongs to the aldehyde dehydrogenase family. AstD subfamily.

It carries out the reaction N-succinyl-L-glutamate 5-semialdehyde + NAD(+) + H2O = N-succinyl-L-glutamate + NADH + 2 H(+). Its pathway is amino-acid degradation; L-arginine degradation via AST pathway; L-glutamate and succinate from L-arginine: step 4/5. In terms of biological role, catalyzes the NAD-dependent reduction of succinylglutamate semialdehyde into succinylglutamate. The protein is N-succinylglutamate 5-semialdehyde dehydrogenase of Escherichia coli O17:K52:H18 (strain UMN026 / ExPEC).